The following is a 579-amino-acid chain: V-type ATP synthase alpha chain (579 aa).

227 to 234 contacts ATP; that stretch reads GGFGTGKT.

This sequence belongs to the ATPase alpha/beta chains family.

It catalyses the reaction ATP + H2O + 4 H(+)(in) = ADP + phosphate + 5 H(+)(out). In terms of biological role, produces ATP from ADP in the presence of a proton gradient across the membrane. The V-type alpha chain is a catalytic subunit. This is V-type ATP synthase alpha chain from Anaeromyxobacter dehalogenans (strain 2CP-C).